The primary structure comprises 733 residues: Neutral ceramidase 3 (733 aa).

The signal sequence occupies residues 1–25 (MTRWSMSMHCTLFLLFLLRLTCIFS). Serine 307 acts as the Nucleophile in catalysis. Asparagine 325 carries N-linked (GlcNAc...) asparagine glycosylation.

Belongs to the neutral ceramidase family.

Its subcellular location is the secreted. The protein localises to the endoplasmic reticulum. The protein resides in the golgi apparatus. The catalysed reaction is an N-acylsphing-4-enine + H2O = sphing-4-enine + a fatty acid. Hydrolyzes the sphingolipid ceramide into sphingosine and free fatty acid. Promotes oxidative stress resistance. The polypeptide is Neutral ceramidase 3 (Arabidopsis thaliana (Mouse-ear cress)).